Reading from the N-terminus, the 491-residue chain is Cysteine--tRNA ligase (491 aa).

Cys31 lines the Zn(2+) pocket. Residues Pro33–His43 carry the 'HIGH' region motif. Zn(2+) contacts are provided by Cys226, His251, and Glu255. The 'KMSKS' region motif lies at Lys283 to Ser287. Lys286 is an ATP binding site.

It belongs to the class-I aminoacyl-tRNA synthetase family. Monomer. Zn(2+) is required as a cofactor.

The protein localises to the cytoplasm. The enzyme catalyses tRNA(Cys) + L-cysteine + ATP = L-cysteinyl-tRNA(Cys) + AMP + diphosphate. The polypeptide is Cysteine--tRNA ligase (Parabacteroides distasonis (strain ATCC 8503 / DSM 20701 / CIP 104284 / JCM 5825 / NCTC 11152)).